A 345-amino-acid chain; its full sequence is uncharacterized protein (345 aa).

This is an uncharacterized protein from Saccharomyces cerevisiae (strain ATCC 204508 / S288c) (Baker's yeast).